A 789-amino-acid polypeptide reads, in one-letter code: Molybdenum cofactor sulfurase (789 aa).

N6-(pyridoxal phosphate)lysine is present on lysine 251. Cysteine 422 is an active-site residue. The 162-residue stretch at 628–789 (GDQVAQWLDQ…LICGETLEVD (162 aa)) folds into the MOSC domain. A Phosphoserine modification is found at serine 741.

It belongs to the class-V pyridoxal-phosphate-dependent aminotransferase family. MOCOS subfamily. It depends on pyridoxal 5'-phosphate as a cofactor.

It catalyses the reaction Mo-molybdopterin + L-cysteine + AH2 = thio-Mo-molybdopterin + L-alanine + A + H2O. It functions in the pathway cofactor biosynthesis; molybdopterin biosynthesis. In terms of biological role, sulfurates the molybdenum cofactor. Sulfation of molybdenum is essential for xanthine dehydrogenase (XDH) and aldehyde oxidase (ADO) enzymes in which molybdenum cofactor is liganded by 1 oxygen and 1 sulfur atom in active form. This Drosophila willistoni (Fruit fly) protein is Molybdenum cofactor sulfurase.